Here is a 288-residue protein sequence, read N- to C-terminus: T-cell-interacting, activating receptor on myeloid cells protein 1 (288 aa).

The N-terminal stretch at Met1–Gly16 is a signal peptide. At Gln17 to Arg258 the chain is on the extracellular side. 2 consecutive Ig-like C2-type domains span residues Pro27 to Asn113 and Pro124 to Ser217. 2 cysteine pairs are disulfide-bonded: Cys49–Cys97 and Cys146–Cys196. N-linked (GlcNAc...) asparagine glycosylation is found at Asn74 and Asn185. Residues Val259–Ser279 form a helical membrane-spanning segment. The Cytoplasmic segment spans residues Glu280–Trp288.

In terms of assembly, interacts with Fc receptor gamma chain FCER1G. N-glycosylated. In terms of tissue distribution, expressed in lung, uterus, lymph nodes, spleen, thymus and bone marrow. Expressed in bone marrow CD11b(+)Gr-1(+) granulocyte precursors and mature neutrophils.

The protein localises to the cell membrane. Its function is as follows. May act as receptor. Negatively regulates TCR-mediated CD4(+) T cell proliferation and activation, possibly by binding an unknown ligand on the T cell surface. Enhances Toll-like receptor-mediated production of pro-inflammatory cytokines by macrophages and neutrophils. The protein is T-cell-interacting, activating receptor on myeloid cells protein 1 (Tarm1) of Mus musculus (Mouse).